Here is a 101-residue protein sequence, read N- to C-terminus: Small ribosomal subunit protein uS17 (101 aa).

This sequence belongs to the universal ribosomal protein uS17 family. As to quaternary structure, part of the 30S ribosomal subunit.

One of the primary rRNA binding proteins, it binds specifically to the 5'-end of 16S ribosomal RNA. This Koribacter versatilis (strain Ellin345) protein is Small ribosomal subunit protein uS17.